The following is a 338-amino-acid chain: Lipoate-protein ligase A (338 aa).

The 188-residue stretch at 29-216 (PATQRVLFLW…AFFSHYGERV (188 aa)) folds into the BPL/LPL catalytic domain. ATP is bound by residues R71, 76–79 (GAVF), and K134. K134 contributes to the (R)-lipoate binding site.

The protein belongs to the LplA family. In terms of assembly, monomer.

Its subcellular location is the cytoplasm. It carries out the reaction L-lysyl-[lipoyl-carrier protein] + (R)-lipoate + ATP = N(6)-[(R)-lipoyl]-L-lysyl-[lipoyl-carrier protein] + AMP + diphosphate + H(+). Its pathway is protein modification; protein lipoylation via exogenous pathway; protein N(6)-(lipoyl)lysine from lipoate: step 1/2. The protein operates within protein modification; protein lipoylation via exogenous pathway; protein N(6)-(lipoyl)lysine from lipoate: step 2/2. Its function is as follows. Catalyzes both the ATP-dependent activation of exogenously supplied lipoate to lipoyl-AMP and the transfer of the activated lipoyl onto the lipoyl domains of lipoate-dependent enzymes. The polypeptide is Lipoate-protein ligase A (Klebsiella pneumoniae (strain 342)).